The primary structure comprises 122 residues: Large ribosomal subunit protein uL14c (122 aa).

This sequence belongs to the universal ribosomal protein uL14 family. Part of the 50S ribosomal subunit.

The protein resides in the plastid. Its subcellular location is the chloroplast. In terms of biological role, binds to 23S rRNA. In Nandina domestica (Heavenly bamboo), this protein is Large ribosomal subunit protein uL14c.